Here is a 96-residue protein sequence, read N- to C-terminus: Co-chaperonin GroES (96 aa).

The protein belongs to the GroES chaperonin family. In terms of assembly, heptamer of 7 subunits arranged in a ring. Interacts with the chaperonin GroEL.

The protein resides in the cytoplasm. Its function is as follows. Together with the chaperonin GroEL, plays an essential role in assisting protein folding. The GroEL-GroES system forms a nano-cage that allows encapsulation of the non-native substrate proteins and provides a physical environment optimized to promote and accelerate protein folding. GroES binds to the apical surface of the GroEL ring, thereby capping the opening of the GroEL channel. The protein is Co-chaperonin GroES of Alcanivorax borkumensis (strain ATCC 700651 / DSM 11573 / NCIMB 13689 / SK2).